We begin with the raw amino-acid sequence, 492 residues long: 3-octaprenyl-4-hydroxybenzoate carboxy-lyase (492 aa).

Position 175 (N175) interacts with Mn(2+). Prenylated FMN is bound by residues 178–180 (IYR), 192–194 (RWL), and 197–198 (RG). Residue E241 participates in Mn(2+) binding. D290 (proton donor) is an active-site residue.

It belongs to the UbiD family. In terms of assembly, homohexamer. The cofactor is prenylated FMN. Mn(2+) is required as a cofactor.

The protein localises to the cell membrane. The catalysed reaction is a 4-hydroxy-3-(all-trans-polyprenyl)benzoate + H(+) = a 2-(all-trans-polyprenyl)phenol + CO2. Its pathway is cofactor biosynthesis; ubiquinone biosynthesis. In terms of biological role, catalyzes the decarboxylation of 3-octaprenyl-4-hydroxy benzoate to 2-octaprenylphenol, an intermediate step in ubiquinone biosynthesis. This is 3-octaprenyl-4-hydroxybenzoate carboxy-lyase from Salmonella paratyphi A (strain ATCC 9150 / SARB42).